Reading from the N-terminus, the 141-residue chain is Large ribosomal subunit protein uL14 (141 aa).

It belongs to the universal ribosomal protein uL14 family.

In Tetrahymena thermophila (strain SB210), this protein is Large ribosomal subunit protein uL14 (RPL23).